We begin with the raw amino-acid sequence, 343 residues long: Heat-inducible transcription repressor HrcA (343 aa).

The protein belongs to the HrcA family.

Its function is as follows. Negative regulator of class I heat shock genes (grpE-dnaK-dnaJ and groELS operons). Prevents heat-shock induction of these operons. This Clostridium botulinum (strain Eklund 17B / Type B) protein is Heat-inducible transcription repressor HrcA.